Reading from the N-terminus, the 259-residue chain is Imidazole glycerol phosphate synthase subunit HisF (259 aa).

Catalysis depends on residues Asp-11 and Asp-130.

The protein belongs to the HisA/HisF family. Heterodimer of HisH and HisF.

The protein resides in the cytoplasm. It carries out the reaction 5-[(5-phospho-1-deoxy-D-ribulos-1-ylimino)methylamino]-1-(5-phospho-beta-D-ribosyl)imidazole-4-carboxamide + L-glutamine = D-erythro-1-(imidazol-4-yl)glycerol 3-phosphate + 5-amino-1-(5-phospho-beta-D-ribosyl)imidazole-4-carboxamide + L-glutamate + H(+). It functions in the pathway amino-acid biosynthesis; L-histidine biosynthesis; L-histidine from 5-phospho-alpha-D-ribose 1-diphosphate: step 5/9. Its function is as follows. IGPS catalyzes the conversion of PRFAR and glutamine to IGP, AICAR and glutamate. The HisF subunit catalyzes the cyclization activity that produces IGP and AICAR from PRFAR using the ammonia provided by the HisH subunit. The protein is Imidazole glycerol phosphate synthase subunit HisF of Solidesulfovibrio magneticus (strain ATCC 700980 / DSM 13731 / RS-1) (Desulfovibrio magneticus).